A 296-amino-acid polypeptide reads, in one-letter code: Protein TIC 21, chloroplastic (296 aa).

A chloroplast-targeting transit peptide spans M1–S90. The next 4 helical transmembrane spans lie at F125–V145, Y156–I176, V208–V228, and V250–L270.

In terms of assembly, homomultimer. Part of the translocon complex. As to expression, ubiquitous. Highest expression in green tissues and very low levels in mature pollen.

It localises to the plastid. It is found in the chloroplast inner membrane. In terms of biological role, involved in chloroplast protein import across the inner envelope membrane. Also acts as a chloroplast permease regulating the iron transport and homeostasis. Involved in the uptake and sequestration of iron in plastids. The chain is Protein TIC 21, chloroplastic (TIC21) from Arabidopsis thaliana (Mouse-ear cress).